The chain runs to 163 residues: MHTRAIYPGTFDPITNGHVDLIERAAKLFKHVTIGIAANPSKQPRFTLEERVELVNRVTAHLDNVDVVGFSGLLVDFAKEQKASVLVRGLRAVSDFEYEFQLANMNRRLSPDLESVFLTPAEENSFISSTLVKEVALHGGDVSQFVHPEVAAALAAKLTSINT.

Residue Thr-10 participates in substrate binding. Residues 10–11 (TF) and His-18 contribute to the ATP site. Lys-42, Leu-74, and Arg-88 together coordinate substrate. ATP contacts are provided by residues 89 to 91 (GLR), Glu-99, and 124 to 130 (NSFISST).

This sequence belongs to the bacterial CoaD family. In terms of assembly, homohexamer. The cofactor is Mg(2+).

The protein resides in the cytoplasm. It carries out the reaction (R)-4'-phosphopantetheine + ATP + H(+) = 3'-dephospho-CoA + diphosphate. The protein operates within cofactor biosynthesis; coenzyme A biosynthesis; CoA from (R)-pantothenate: step 4/5. Reversibly transfers an adenylyl group from ATP to 4'-phosphopantetheine, yielding dephospho-CoA (dPCoA) and pyrophosphate. The sequence is that of Phosphopantetheine adenylyltransferase from Shewanella putrefaciens (strain CN-32 / ATCC BAA-453).